Consider the following 630-residue polypeptide: 1,4-alpha-glucan branching enzyme GlgB (630 aa).

Asp-311 (nucleophile) is an active-site residue. The Proton donor role is filled by Glu-362.

It belongs to the glycosyl hydrolase 13 family. GlgB subfamily. Monomer.

It catalyses the reaction Transfers a segment of a (1-&gt;4)-alpha-D-glucan chain to a primary hydroxy group in a similar glucan chain.. The protein operates within glycan biosynthesis; glycogen biosynthesis. In terms of biological role, catalyzes the formation of the alpha-1,6-glucosidic linkages in glycogen by scission of a 1,4-alpha-linked oligosaccharide from growing alpha-1,4-glucan chains and the subsequent attachment of the oligosaccharide to the alpha-1,6 position. This chain is 1,4-alpha-glucan branching enzyme GlgB, found in Aquifex aeolicus (strain VF5).